A 196-amino-acid polypeptide reads, in one-letter code: Ribonuclease HII (196 aa).

The 188-residue stretch at 9–196 (NLIAGVDEVG…APVKRALNLV (188 aa)) folds into the RNase H type-2 domain. Positions 15, 16, and 107 each coordinate a divalent metal cation.

The protein belongs to the RNase HII family. Mn(2+) serves as cofactor. The cofactor is Mg(2+).

The protein localises to the cytoplasm. It carries out the reaction Endonucleolytic cleavage to 5'-phosphomonoester.. Its function is as follows. Endonuclease that specifically degrades the RNA of RNA-DNA hybrids. In Proteus mirabilis (strain HI4320), this protein is Ribonuclease HII.